The following is a 596-amino-acid chain: Arginine--tRNA ligase (596 aa).

The short motif at 128 to 138 (ANPTSSLHVGH) is the 'HIGH' region element.

The protein belongs to the class-I aminoacyl-tRNA synthetase family. As to quaternary structure, monomer.

The protein resides in the cytoplasm. The catalysed reaction is tRNA(Arg) + L-arginine + ATP = L-arginyl-tRNA(Arg) + AMP + diphosphate. This is Arginine--tRNA ligase from Acinetobacter baumannii (strain SDF).